The following is an 88-amino-acid chain: Platelet factor 4 (88 aa).

The O-linked (GalNAc...) threonine glycan is linked to T7. Disulfide bonds link C25/C51 and C27/C67. Position 41 is a phosphoserine (S41). 76 to 82 (KKILKKL) provides a ligand contact to heparin.

It belongs to the intercrine alpha (chemokine CxC) family. Homotetramer. Interacts with TNFAIP6 (via Link domain). Interacts with CCR1. Interacts with CXCR3. Interacts with THBD; this interaction enhances generation of activated protein C. Post-translationally, O-linked glycan consists of Gal-GalNAc disaccharide which is modified with sialic acid residues (microheterogeneity).

The protein resides in the secreted. Functionally, chemokine released during platelet aggregation that plays a role in different biological processes including hematopoiesis, cell proliferation, differentiation, and activation. Acts via different functional receptors including CCR1, CXCR3A or CXCR3B. Upon interaction with CXCR3A receptor, induces activated T-lymphocytes migration mediated via downstream Ras/extracellular signal-regulated kinase (ERK) signaling. Neutralizes the anticoagulant effect of heparin by binding more strongly to heparin than to the chondroitin-4-sulfate chains of the carrier molecule. Plays a role in the inhibition of hematopoiesis and in the maintenance of hematopoietic stem cell (HSC) quiescence. Chemotactic for neutrophils and monocytes via CCR1. Inhibits endothelial cell proliferation. In cooperation with toll-like receptor 8/TLR8, induces chromatin remodeling and activates inflammatory gene expression via the TBK1-IRF5 axis. In addition, induces myofibroblast differentiation and collagen synthesis in different precursor cells, including endothelial cells, by stimulating endothelial-to-mesenchymal transition. Interacts with thrombomodulin/THBD to enhance the activation of protein C and thus potentiates its anticoagulant activity. The sequence is that of Platelet factor 4 (PF4) from Bos taurus (Bovine).